The sequence spans 222 residues: Transmembrane protein 54 (222 aa).

Transmembrane regions (helical) follow at residues 22–42 (LVLVVLGHVSFITAALFHGTV), 62–82 (ILSVTSAIVVITSGIAAIVLS), 100–120 (ACALLSLTCALGLLASIAMTF), and 155–175 (SSLCLWGIALVLCVAENVFAV).

It belongs to the TMEM54 family. In terms of tissue distribution, ubiquitously expressed in cancer cell lines.

It localises to the membrane. This Homo sapiens (Human) protein is Transmembrane protein 54 (TMEM54).